The sequence spans 248 residues: Probable transcriptional regulatory protein FTM_1203 (248 aa).

The protein belongs to the TACO1 family.

It localises to the cytoplasm. The protein is Probable transcriptional regulatory protein FTM_1203 of Francisella tularensis subsp. mediasiatica (strain FSC147).